The sequence spans 822 residues: Nose resistant to fluoxetine protein 6 (822 aa).

The signal sequence occupies residues 1–24; that stretch reads MGNMRRLLIFAVLVILTVISNSKS. N-linked (GlcNAc...) asparagine glycosylation is present at Asn236. 3 helical membrane-spanning segments follow: residues 306–326, 617–637, and 655–675; these read LAMF…FGTL, PYIR…LNAW, and IICW…LYWF.

It belongs to the acyltransferase 3 family. In terms of tissue distribution, in L1 larvae through to adult, hyp3 and hyp5, the most anterior cells in the hypodermis, and in intestine. Other hypodermal cells show weaker expression.

Its subcellular location is the membrane. Functionally, plays a role in the uptake of a range of molecules including lipids and xenobiotic compounds from the intestine to surrounding tissues. Mediates transport of lipids from intestine to the reproductive tract. Required for efficient yolk transport into oocytes. Vital for embryonic development. The chain is Nose resistant to fluoxetine protein 6 (nrf-6) from Caenorhabditis elegans.